A 529-amino-acid chain; its full sequence is Heat shock factor protein 1 (529 aa).

Met-1 is subject to N-acetylmethionine. The tract at residues 15 to 120 is DNA-binding domain; sequence VPAFLTKLWT…LLENIKRKVT (106 aa). N6-acetyllysine is present on Lys-80. Lys-91 bears the N6-acetyllysine; alternate mark. Lys-91 participates in a covalent cross-link: Glycyl lysine isopeptide (Lys-Gly) (interchain with G-Cter in SUMO2); alternate. At Lys-118 the chain carries N6-acetyllysine. Ser-121 bears the Phosphoserine; by MAPKAPK2 mark. Glycyl lysine isopeptide (Lys-Gly) (interchain with G-Cter in SUMO2) cross-links involve residues Lys-126 and Lys-131. The tract at residues 130 to 203 is hydrophobic repeat HR-A/B; sequence IKIRQDSVTK…ISLVQSNRIL (74 aa). Thr-142 carries the post-translational modification Phosphothreonine; by CK2. N6-acetyllysine is present on residues Lys-150 and Lys-188. The segment at 203–224 is d domain; the sequence is LGVKRKIPLMLNDSGSAHSMPK. The residue at position 208 (Lys-208) is an N6-acetyllysine; alternate. A Glycyl lysine isopeptide (Lys-Gly) (interchain with G-Cter in SUMO2); alternate cross-link involves residue Lys-208. The residue at position 216 (Ser-216) is a Phosphoserine; by PLK1. Residues 221–310 form a regulatory domain region; that stretch reads SMPKYSRQFS…PPSPPQSPRV (90 aa). Lys-224 participates in a covalent cross-link: Glycyl lysine isopeptide (Lys-Gly) (interchain with G-Cter in SUMO2). The residue at position 230 (Ser-230) is a Phosphoserine; by CAMK2A. Ser-275 and Ser-292 each carry phosphoserine. Residues 295-324 form a disordered region; sequence VRVKEEPPSPPQSPRVEEASPGRPSSVDTL. Lys-298 bears the N6-acetyllysine; alternate mark. A Glycyl lysine isopeptide (Lys-Gly) (interchain with G-Cter in SUMO2); alternate cross-link involves residue Lys-298. Lys-298 participates in a covalent cross-link: Glycyl lysine isopeptide (Lys-Gly) (interchain with G-Cter in SUMO); alternate. Ser-303 carries the phosphoserine; by GSK3-beta modification. The residue at position 307 (Ser-307) is a Phosphoserine; by MAPK3. Phosphoserine is present on residues Ser-314 and Ser-319. A Phosphoserine; by PKA modification is found at Ser-320. Residue Thr-323 is modified to Phosphothreonine. Ser-326 is subject to Phosphoserine; by MAPK12. A disordered region spans residues 336-372; it reads RESEPAPASVTALTDARGHTDTEGRPPSPPPTSTPEK. Phosphoserine is present on Ser-344. Ser-363 bears the Phosphoserine; by MAPK8 mark. The segment at 371 to 529 is transactivation domain; it reads EKCLSVACLD…PPKAKDPTVS (159 aa). Residues 384-409 form a hydrophobic repeat HR-C region; that stretch reads LSDHLDAMDSNLDNLQTMLSSHGFSV. A 9aaTAD motif is present at residues 412-420; that stretch reads SALLDLFSP. Ser-419 bears the Phosphoserine; by PLK1 mark. Ser-444 is subject to Phosphoserine. Disordered stretches follow at residues 444–463 and 502–529; these read SPQE…DSGK and EGDG…PTVS. Position 524 is an N6-acetyllysine (Lys-524).

This sequence belongs to the HSF family. In terms of assembly, monomer; cytoplasmic latent and transcriptionally inactive monomeric form in unstressed cells. Homotrimer; in response to stress, such as heat shock, homotrimerizes and translocates into the nucleus, binds to heat shock element (HSE) sequences in promoter of heat shock protein (HSP) genes and acquires transcriptional ability. Interacts (via monomeric form) with FKBP4; this interaction occurs in unstressed cells. Associates (via monomeric form) with HSP90 proteins in a multichaperone complex in unnstressed cell; this association maintains HSF1 in a non-DNA-binding and transcriptional inactive form by preventing HSF1 homotrimerization. Homotrimeric transactivation activity is modulated by protein-protein interactions and post-translational modifications. Interacts with HSP90AA1; this interaction is decreased in a IER5-dependent manner, promoting HSF1 accumulation in the nucleus, homotrimerization and DNA-binding activities. Part (via regulatory domain in the homotrimeric form) of a large heat shock-induced HSP90-dependent multichaperone complex at least composed of FKBP4, FKBP5, HSP90 proteins, PPID, PPP5C and PTGES3; this association maintains the HSF1 homotrimeric DNA-bound form in a transcriptionally inactive form. Interacts with BAG3 (via BAG domain); this interaction occurs in normal and heat-shocked cells promoting nuclear shuttling of HSF1 in a BAG3-dependent manner. Interacts (via homotrimeric and hyperphosphorylated form) with FKBP4; this interaction occurs upon heat shock in a HSP90-dependent multichaperone complex. Interacts (via homotrimeric form preferentially) with EEF1A proteins. In heat shocked cells, stress-denatured proteins compete with HSF1 homotrimeric DNA-bound form for association of the HSP90-dependent multichaperone complex, and hence alleviating repression of HSF1-mediated transcriptional activity. Interacts (via homotrimeric form preferentially) with DAXX; this interaction relieves homotrimeric HSF1 from repression of its transcriptional activity by HSP90-dependent multichaperone complex upon heat shock. Interacts (via D domain and preferentially with hyperphosphorylated form) with JNK1; this interaction occurs under both normal growth conditions and immediately upon heat shock. Interacts (via D domain and preferentially with hyperphosphorylated form) with MAPK3; this interaction occurs upon heat shock. Interacts with IER5 (via central region); this interaction promotes PPP2CA-induced dephosphorylation on Ser-121, Ser-307, Ser-314, Thr-323 and Thr-367 and HSF1 transactivation activity. Found in a ribonucleoprotein complex composed of the HSF1 homotrimeric form, translation elongation factor eEF1A proteins and non-coding RNA heat shock RNA-1 (HSR1); this complex occurs upon heat shock and stimulates HSF1 DNA-binding activity. Interacts (via transactivation domain) with HSPA1A/HSP70 and DNAJB1; these interactions result in the inhibition of heat shock- and HSF1-induced transcriptional activity during the attenuation and recovery phase from heat shock. Interacts (via Ser-303 and Ser-307 phosphorylated form) with YWHAE; this interaction promotes HSF1 sequestration in the cytoplasm in an ERK-dependent manner. Found in a complex with IER5 and PPP2CA. Interacts with TPR; this interaction increases upon heat shock and stimulates export of HSP70 mRNA. Interacts with SYMPK (via N-terminus) and CSTF2; these interactions occur upon heat shock. Interacts (via transactivation domain) with HSPA8. Interacts with EEF1D; this interaction occurs at heat shock promoter element (HSE) sequences. Interacts with MAPKAPK2. Interacts with PRKACA/PKA. Interacts (via transactivation domain) with GTF2A2. Interacts (via transactivation domain) with GTF2B. Interacts (via transactivation domain) with TBP. Interacts with CDK9, CCNT1 and EP300. Interacts (via N-terminus) with XRCC5 (via N-terminus) and XRCC6 (via N-terminus); these interactions are direct and prevent XRCC5/XRCC6 heterodimeric binding and non-homologous end joining (NHEJ) repair activities induced by ionizing radiation (IR). Interacts with PLK1; this interaction occurs during the early mitotic period, increases upon heat shock but does not modulate neither HSF1 homotrimerization and DNA-binding activities. Interacts (via Ser-216 phosphorylated form) with CDC20; this interaction occurs in mitosis in a MAD2L1-dependent manner and prevents PLK1-stimulated degradation of HSF1 by blocking the recruitment of the SCF(BTRC) ubiquitin ligase complex. Interacts with MAD2L1; this interaction occurs in mitosis. Interacts with BTRC; this interaction occurs during mitosis, induces its ubiquitin-dependent degradation following stimulus-dependent phosphorylation at Ser-216, a process inhibited by CDC20. Interacts with HSP90AA1 and HSP90AB1. Forms a complex with TTC5/STRAP and p300/EP300; these interactions augment chromatin-bound HSF1 and p300/EP300 histone acetyltransferase activity. In terms of processing, phosphorylated. Phosphorylated in unstressed cells; this phosphorylation is constitutive and implicated in the repression of HSF1 transcriptional activity. Phosphorylated on Ser-121 by MAPKAPK2; this phosphorylation promotes interaction with HSP90 proteins and inhibits HSF1 homotrimerization, DNA-binding and transactivation activities. Phosphorylation on Ser-303 by GSK3B/GSK3-beta and on Ser-307 by MAPK3 within the regulatory domain is involved in the repression of HSF1 transcriptional activity and occurs in a RAF1-dependent manner. Phosphorylation on Ser-303 and Ser-307 increases HSF1 nuclear export in a YWHAE- and XPO1/CRM1-dependent manner. Phosphorylation on Ser-307 is a prerequisite for phosphorylation on Ser-303. According to PubMed:9535852, Ser-303 is not phosphorylated in unstressed cells. Phosphorylated on Ser-419 by PLK1; phosphorylation promotes nuclear translocation upon heat shock. Hyperphosphorylated upon heat shock and during the attenuation and recovery phase period of the heat shock response. Phosphorylated on Thr-142; this phosphorylation increases HSF1 transactivation activity upon heat shock. Phosphorylation on Ser-230 by CAMK2A; this phosphorylation enhances HSF1 transactivation activity upon heat shock. Phosphorylation on Ser-326 by MAPK12; this phosphorylation enhances HSF1 nuclear translocation, homotrimerization and transactivation activities upon heat shock. Phosphorylated on Ser-320 by PRKACA/PKA; this phosphorylation promotes nuclear localization and transcriptional activity upon heat shock. Phosphorylated on Ser-363 by MAPK8; this phosphorylation occurs upon heat shock, induces HSF1 translocation into nuclear stress bodies and negatively regulates transactivation activity. Neither basal nor stress-inducible phosphorylation on Ser-230, Ser-292, Ser-303, Ser-307, Ser-314, Ser-319, Ser-320, Thr-323, Ser-326, Ser-338, Ser-344, Ser-363, Thr-367, Ser-368 and Thr-369 within the regulatory domain is involved in the regulation of HSF1 subcellular localization or DNA-binding activity; however, it negatively regulates HSF1 transactivation activity. Phosphorylated on Ser-216 by PLK1 in the early mitotic period; this phosphorylation regulates HSF1 localization to the spindle pole, the recruitment of the SCF(BTRC) ubiquitin ligase complex inducing HSF1 degradation, and hence mitotic progression. Dephosphorylated on Ser-121, Ser-307, Ser-314, Thr-323 and Thr-367 by phosphatase PPP2CA in an IER5-dependent manner, leading to HSF1-mediated transactivation activity. Post-translationally, sumoylated with SUMO1 and SUMO2 upon heat shock in a ERK2-dependent manner. Sumoylated by SUMO1 on Lys-298; sumoylation occurs upon heat shock and promotes its localization to nuclear stress bodies and DNA-binding activity. Phosphorylation on Ser-303 and Ser-307 is probably a prerequisite for sumoylation. Acetylated on Lys-118; this acetylation is decreased in a IER5-dependent manner. Acetylated on Lys-118, Lys-208 and Lys-298; these acetylations occur in a EP300-dependent manner. Acetylated on Lys-80; this acetylation inhibits DNA-binding activity upon heat shock. Deacetylated on Lys-80 by SIRT1; this deacetylation increases DNA-binding activity. In terms of processing, ubiquitinated by SCF(BTRC) and degraded following stimulus-dependent phosphorylation at Ser-216 by PLK1 in mitosis. Polyubiquitinated. Undergoes proteasomal degradation upon heat shock and during the attenuation and recovery phase period of the heat shock response.

The protein resides in the nucleus. It localises to the cytoplasm. The protein localises to the nucleoplasm. It is found in the perinuclear region. Its subcellular location is the cytoskeleton. The protein resides in the spindle pole. It localises to the microtubule organizing center. The protein localises to the centrosome. It is found in the chromosome. Its subcellular location is the centromere. The protein resides in the kinetochore. Functions as a stress-inducible and DNA-binding transcription factor that plays a central role in the transcriptional activation of the heat shock response (HSR), leading to the expression of a large class of molecular chaperones, heat shock proteins (HSPs), that protect cells from cellular insult damage. In unstressed cells, is present in a HSP90-containing multichaperone complex that maintains it in a non-DNA-binding inactivated monomeric form. Upon exposure to heat and other stress stimuli, undergoes homotrimerization and activates HSP gene transcription through binding to site-specific heat shock elements (HSEs) present in the promoter regions of HSP genes. Upon heat shock stress, forms a chromatin-associated complex with TTC5/STRAP and p300/EP300 to stimulate HSR transcription, therefore increasing cell survival. Activation is reversible, and during the attenuation and recovery phase period of the HSR, returns to its unactivated form. Binds to inverted 5'-NGAAN-3' pentamer DNA sequences. Binds to chromatin at heat shock gene promoters. Activates transcription of transcription factor FOXR1 which in turn activates transcription of the heat shock chaperones HSPA1A and HSPA6 and the antioxidant NADPH-dependent reductase DHRS2. Also serves several other functions independently of its transcriptional activity. Involved in the repression of Ras-induced transcriptional activation of the c-fos gene in heat-stressed cells. Positively regulates pre-mRNA 3'-end processing and polyadenylation of HSP70 mRNA upon heat-stressed cells in a symplekin (SYMPK)-dependent manner. Plays a role in nuclear export of stress-induced HSP70 mRNA. Plays a role in the regulation of mitotic progression. Also plays a role as a negative regulator of non-homologous end joining (NHEJ) repair activity in a DNA damage-dependent manner. Involved in stress-induced cancer cell proliferation in a IER5-dependent manner. Functionally, (Microbial infection) Plays a role in latent human immunodeficiency virus (HIV-1) transcriptional reactivation. Binds to the HIV-1 long terminal repeat promoter (LTR) to reactivate viral transcription by recruiting cellular transcriptional elongation factors, such as CDK9, CCNT1 and EP300. In Homo sapiens (Human), this protein is Heat shock factor protein 1.